Consider the following 30-residue polypeptide: Brevinin-2Rg (30 aa).

Cys24 and Cys30 are oxidised to a cystine.

In terms of tissue distribution, expressed by the skin glands.

The protein resides in the secreted. In terms of biological role, antimicrobial peptide. This Pelophylax ridibundus (Marsh frog) protein is Brevinin-2Rg.